The sequence spans 467 residues: Cysteine--tRNA ligase (467 aa).

Position 28 (Cys-28) interacts with Zn(2+). Residues 30-40 carry the 'HIGH' region motif; sequence ITAYDYSHIGH. Zn(2+) contacts are provided by Cys-211, His-236, and Glu-240. Residues 268–272 carry the 'KMSKS' region motif; the sequence is KMSKS. Lys-271 serves as a coordination point for ATP.

It belongs to the class-I aminoacyl-tRNA synthetase family. The cofactor is Zn(2+).

It is found in the cytoplasm. It carries out the reaction tRNA(Cys) + L-cysteine + ATP = L-cysteinyl-tRNA(Cys) + AMP + diphosphate. This is Cysteine--tRNA ligase (cysS) from Archaeoglobus fulgidus (strain ATCC 49558 / DSM 4304 / JCM 9628 / NBRC 100126 / VC-16).